A 534-amino-acid chain; its full sequence is Pentatricopeptide repeat-containing protein At5g50990 (534 aa).

6 PPR repeats span residues 128–158, 164–198, 199–229, 230–264, 265–295, and 301–331; these read NVIT…MLSF, NKFS…GIEL, NAIL…VKRN, DVSI…HVSP, DSIT…MSRR, and KLEH…MPIE. The tract at residues 336-408 is type E motif; it reads IWRSLLSSSR…AKGKSWLEFG (73 aa). A type E(+) motif region spans residues 409 to 439; sequence GMIHRFKAGDTSHIETKAIYKVLEGLIQKTK. A type DYW motif region spans residues 440–534; it reads SQGFVSDTDL…DGLCSCRDYW (95 aa).

Belongs to the PPR family. PCMP-H subfamily.

The protein is Pentatricopeptide repeat-containing protein At5g50990 (PCMP-H59) of Arabidopsis thaliana (Mouse-ear cress).